The sequence spans 512 residues: Respiratory nitrate reductase 1 beta chain (512 aa).

3 consecutive 4Fe-4S ferredoxin-type domains span residues Val-7–Gly-35, Thr-175–Glu-206, and Gly-208–Lys-237. [4Fe-4S] cluster is bound by residues Cys-16, Cys-19, Cys-22, Cys-26, Cys-184, Cys-187, and Cys-192. Residues Cys-196, Cys-217, and Cys-223 each contribute to the [3Fe-4S] cluster site. [4Fe-4S] cluster-binding residues include Cys-227, Cys-244, Cys-247, Cys-259, and Cys-263.

Dimer of heterotrimers each composed of an alpha, a beta and a gamma chain. Alpha and beta are catalytic chains; gamma chains are involved in binding the enzyme complex to the cytoplasmic membrane. [4Fe-4S] cluster is required as a cofactor. It depends on [3Fe-4S] cluster as a cofactor.

Its subcellular location is the cell membrane. It carries out the reaction nitrate + a quinol = a quinone + nitrite + H2O. Functionally, the nitrate reductase enzyme complex allows E.coli to use nitrate as an electron acceptor during anaerobic growth. The beta chain is an electron transfer unit containing four cysteine clusters involved in the formation of iron-sulfur centers. Electrons are transferred from the gamma chain to the molybdenum cofactor of the alpha subunit. The polypeptide is Respiratory nitrate reductase 1 beta chain (narH) (Escherichia coli (strain K12)).